Consider the following 415-residue polypeptide: Dihydroorotase (415 aa).

Positions 54 and 56 each coordinate Zn(2+). Substrate is bound by residues H56–R58 and N88. The Zn(2+) site is built by K136, H169, H217, and D278. An N6-carboxylysine modification is found at K136. D278 is an active-site residue. H282 is a binding site for substrate.

It belongs to the metallo-dependent hydrolases superfamily. DHOase family. Class I DHOase subfamily. Zn(2+) serves as cofactor.

It carries out the reaction (S)-dihydroorotate + H2O = N-carbamoyl-L-aspartate + H(+). Its pathway is pyrimidine metabolism; UMP biosynthesis via de novo pathway; (S)-dihydroorotate from bicarbonate: step 3/3. Functionally, catalyzes the reversible cyclization of carbamoyl aspartate to dihydroorotate. In Thermoplasma volcanium (strain ATCC 51530 / DSM 4299 / JCM 9571 / NBRC 15438 / GSS1), this protein is Dihydroorotase.